We begin with the raw amino-acid sequence, 180 residues long: Inosine/xanthosine triphosphatase (180 aa).

Substrate is bound at residue 8–13; it reads TTNPAK. Asp38 is a binding site for Mg(2+).

This sequence belongs to the YjjX NTPase family. Homodimer. Mg(2+) serves as cofactor. Mn(2+) is required as a cofactor.

The catalysed reaction is XTP + H2O = XDP + phosphate + H(+). It carries out the reaction ITP + H2O = IDP + phosphate + H(+). Phosphatase that hydrolyzes non-canonical purine nucleotides such as XTP and ITP to their respective diphosphate derivatives. Probably excludes non-canonical purines from DNA/RNA precursor pool, thus preventing their incorporation into DNA/RNA and avoiding chromosomal lesions. In Yersinia pseudotuberculosis serotype O:1b (strain IP 31758), this protein is Inosine/xanthosine triphosphatase.